The primary structure comprises 222 residues: Embryonic stem cell-related gene protein (222 aa).

As to expression, expressed only in fetal ovary and in undifferentiated ES cells.

Its subcellular location is the nucleus. This Homo sapiens (Human) protein is Embryonic stem cell-related gene protein (ESRG).